An 814-amino-acid chain; its full sequence is DNA ligase (814 aa).

Residues 46 to 50 (DAEYD), 95 to 96 (SL), and Glu129 each bind NAD(+). The active-site N6-AMP-lysine intermediate is the Lys131. NAD(+)-binding residues include Arg152, Glu189, Lys305, and Lys329. Residues Cys434, Cys437, Cys458, and Cys464 each coordinate Zn(2+). The segment at 525 to 548 (LSAQRRSEGEPAPKKPTKKKGEEE) is disordered. A BRCT domain is found at 735–814 (TSAAAFAGKT…DDWLAMLAEA (80 aa)).

Belongs to the NAD-dependent DNA ligase family. LigA subfamily. Mg(2+) is required as a cofactor. Mn(2+) serves as cofactor.

It catalyses the reaction NAD(+) + (deoxyribonucleotide)n-3'-hydroxyl + 5'-phospho-(deoxyribonucleotide)m = (deoxyribonucleotide)n+m + AMP + beta-nicotinamide D-nucleotide.. Its function is as follows. DNA ligase that catalyzes the formation of phosphodiester linkages between 5'-phosphoryl and 3'-hydroxyl groups in double-stranded DNA using NAD as a coenzyme and as the energy source for the reaction. It is essential for DNA replication and repair of damaged DNA. This Methylorubrum extorquens (strain PA1) (Methylobacterium extorquens) protein is DNA ligase.